Consider the following 475-residue polypeptide: tRNA-2-methylthio-N(6)-dimethylallyladenosine synthase (475 aa).

A disordered region spans residues 1 to 20 (MEQNLTTERSETSSSRAGTA). The region spanning 25 to 145 (KKVFVKTYGC…LPSVVTRARA (121 aa)) is the MTTase N-terminal domain. [4Fe-4S] cluster is bound by residues C34, C70, C108, C186, C190, and C193. The region spanning 172-404 (RSRGVTAFLT…QALLAEQQRA (233 aa)) is the Radical SAM core domain. One can recognise a TRAM domain in the interval 407–469 (ESLVGTEIDL…GHSLFCEPAG (63 aa)).

The protein belongs to the methylthiotransferase family. MiaB subfamily. As to quaternary structure, monomer. It depends on [4Fe-4S] cluster as a cofactor.

Its subcellular location is the cytoplasm. It carries out the reaction N(6)-dimethylallyladenosine(37) in tRNA + (sulfur carrier)-SH + AH2 + 2 S-adenosyl-L-methionine = 2-methylsulfanyl-N(6)-dimethylallyladenosine(37) in tRNA + (sulfur carrier)-H + 5'-deoxyadenosine + L-methionine + A + S-adenosyl-L-homocysteine + 2 H(+). In terms of biological role, catalyzes the methylthiolation of N6-(dimethylallyl)adenosine (i(6)A), leading to the formation of 2-methylthio-N6-(dimethylallyl)adenosine (ms(2)i(6)A) at position 37 in tRNAs that read codons beginning with uridine. The polypeptide is tRNA-2-methylthio-N(6)-dimethylallyladenosine synthase (Chelativorans sp. (strain BNC1)).